Consider the following 84-residue polypeptide: Small ribosomal subunit protein uS17 (84 aa).

Belongs to the universal ribosomal protein uS17 family. Part of the 30S ribosomal subunit.

Functionally, one of the primary rRNA binding proteins, it binds specifically to the 5'-end of 16S ribosomal RNA. The protein is Small ribosomal subunit protein uS17 of Borrelia garinii subsp. bavariensis (strain ATCC BAA-2496 / DSM 23469 / PBi) (Borreliella bavariensis).